A 195-amino-acid chain; its full sequence is dITP/XTP pyrophosphatase (195 aa).

Residue 9 to 14 (TNNQGK) participates in substrate binding. Residues Glu39 and Asp68 each contribute to the Mg(2+) site. The Proton acceptor role is filled by Asp68. Substrate contacts are provided by residues Ser69, 146 to 149 (FGYD), Lys169, and 174 to 175 (HR).

Belongs to the HAM1 NTPase family. In terms of assembly, homodimer. The cofactor is Mg(2+).

The catalysed reaction is XTP + H2O = XMP + diphosphate + H(+). It catalyses the reaction dITP + H2O = dIMP + diphosphate + H(+). The enzyme catalyses ITP + H2O = IMP + diphosphate + H(+). Its function is as follows. Pyrophosphatase that catalyzes the hydrolysis of nucleoside triphosphates to their monophosphate derivatives, with a high preference for the non-canonical purine nucleotides XTP (xanthosine triphosphate), dITP (deoxyinosine triphosphate) and ITP. Seems to function as a house-cleaning enzyme that removes non-canonical purine nucleotides from the nucleotide pool, thus preventing their incorporation into DNA/RNA and avoiding chromosomal lesions. This chain is dITP/XTP pyrophosphatase, found in Gloeobacter violaceus (strain ATCC 29082 / PCC 7421).